The following is a 162-amino-acid chain: Probable chemoreceptor glutamine deamidase CheD (162 aa).

It belongs to the CheD family.

The catalysed reaction is L-glutaminyl-[protein] + H2O = L-glutamyl-[protein] + NH4(+). In terms of biological role, probably deamidates glutamine residues to glutamate on methyl-accepting chemotaxis receptors (MCPs), playing an important role in chemotaxis. This chain is Probable chemoreceptor glutamine deamidase CheD, found in Syntrophotalea carbinolica (strain DSM 2380 / NBRC 103641 / GraBd1) (Pelobacter carbinolicus).